A 264-amino-acid chain; its full sequence is Undecaprenyl-diphosphatase (264 aa).

A run of 7 helical transmembrane segments spans residues 42–62 (ESLL…LVVF), 82–102 (TQFS…GLLF), 109–129 (LFGG…LLLW), 146–166 (AFII…RSGA), 184–204 (FSFL…LMSG), 215–235 (ILAT…TWMI), and 243–263 (LSWF…FAYA).

Belongs to the UppP family.

It is found in the cell membrane. The enzyme catalyses di-trans,octa-cis-undecaprenyl diphosphate + H2O = di-trans,octa-cis-undecaprenyl phosphate + phosphate + H(+). In terms of biological role, catalyzes the dephosphorylation of undecaprenyl diphosphate (UPP). Confers resistance to bacitracin. The chain is Undecaprenyl-diphosphatase from Christiangramia forsetii (strain DSM 17595 / CGMCC 1.15422 / KT0803) (Gramella forsetii).